A 196-amino-acid chain; its full sequence is Imidazoleglycerol-phosphate dehydratase (196 aa).

It belongs to the imidazoleglycerol-phosphate dehydratase family.

The protein localises to the cytoplasm. The enzyme catalyses D-erythro-1-(imidazol-4-yl)glycerol 3-phosphate = 3-(imidazol-4-yl)-2-oxopropyl phosphate + H2O. Its pathway is amino-acid biosynthesis; L-histidine biosynthesis; L-histidine from 5-phospho-alpha-D-ribose 1-diphosphate: step 6/9. This is Imidazoleglycerol-phosphate dehydratase from Solidesulfovibrio magneticus (strain ATCC 700980 / DSM 13731 / RS-1) (Desulfovibrio magneticus).